An 871-amino-acid polypeptide reads, in one-letter code: Serrate RNA effector molecule homolog (871 aa).

The interval 1 to 90 is disordered; the sequence is MGDSDDEYDR…RRDWDGHSSD (90 aa). At Gly-2 the chain carries N-acetylglycine. Ser-4 carries the post-translational modification Phosphoserine. At Tyr-8 the chain carries Phosphotyrosine. Positions 8-73 are enriched in basic and acidic residues; that stretch reads YDRRRRDKFR…ERFSPPRHEL (66 aa). 3 positions are modified to phosphoserine: Ser-67, Ser-74, and Ser-136. Lys-150 is covalently cross-linked (Glycyl lysine isopeptide (Lys-Gly) (interchain with G-Cter in SUMO2)). The tract at residues 272-411 is disordered; sequence EEEEQAGKPG…KPKDAAGLEC (140 aa). The span at 297–347 shows a compositional bias: basic and acidic residues; it reads DGERKTNDKDEKKEDSKQAENDSSNDDKTKKSEGDGDKEEKKEDSEKEAKK. Acidic residues predominate over residues 370-385; the sequence is SESESESGQAEEEKEE. The span at 386-411 shows a compositional bias: basic and acidic residues; that stretch reads AEALKEKEKPKEEEWEKPKDAAGLEC. Residues Ser-492 and Ser-539 each carry the phosphoserine modification. Thr-543 is subject to Phosphothreonine. Residue Ser-569 is modified to Phosphoserine. Residues 574 to 597 are disordered; sequence ELLGSSGGAPPEEPPKEGNPAEIN. Thr-670 carries the post-translational modification Phosphothreonine. A Phosphoserine modification is found at Ser-678. Arg-828, Arg-835, and Arg-845 each carry omega-N-methylarginine. The disordered stretch occupies residues 830 to 849; it reads NYDAFRGQGGYPGKPRNRMV.

Belongs to the ARS2 family. As to quaternary structure, interacts with CASP8AP2, ERBB4, NCBP1/CBP80 and DROSHA. Interacts with LUZP4. Interacts with NCBP2/CBP20 and NCBP3. Interacts with MTREX.

The protein resides in the nucleus. Its subcellular location is the nucleoplasm. It localises to the cytoplasm. In terms of biological role, acts as a mediator between the cap-binding complex (CBC) and the primary microRNAs (miRNAs) processing machinery during cell proliferation. Contributes to the stability and delivery of capped primary miRNA transcripts to the primary miRNA processing complex containing DGCR8 and DROSHA, thereby playing a role in RNA-mediated gene silencing (RNAi) by miRNAs. Binds capped RNAs (m7GpppG-capped RNA); however interaction is probably mediated via its interaction with NCBP1/CBP80 component of the CBC complex. Involved in cell cycle progression at S phase. Does not directly confer arsenite resistance but rather modulates arsenic sensitivity. Independently of its activity on miRNAs, necessary and sufficient to promote neural stem cell self-renewal. Does so by directly binding SOX2 promoter and positively regulating its transcription. This Pongo abelii (Sumatran orangutan) protein is Serrate RNA effector molecule homolog (SRRT).